The following is a 185-amino-acid chain: Probable calcium-binding protein CML10 (185 aa).

Residues 1-41 are disordered; sequence MVKIKMPALFRRRSGSKSPPLPQADPASGGGSPAPTPEEEM. EF-hand domains are found at residues 36–71, 72–107, 110–145, and 146–181; these read TPEE…LGHA, ATDD…ASGD, AVEE…LGEK, and ATVQ…GGSF. 18 residues coordinate Ca(2+): Asp-49, Asn-51, Asp-53, Arg-55, Glu-60, Asp-85, Asp-87, Asp-89, Glu-96, Asp-123, Asp-125, Asn-127, Thr-129, Glu-134, Asp-159, Asn-161, Asp-163, and Glu-170.

Potential calcium sensor. The protein is Probable calcium-binding protein CML10 (CML10) of Oryza sativa subsp. japonica (Rice).